The primary structure comprises 218 residues: Mitochondrial fission factor (218 aa).

Residues 1 to 198 are Cytoplasmic-facing; sequence MAEISRIQYE…ENKERAKREM (198 aa). Phosphothreonine is present on Thr89. Phosphoserine occurs at positions 129, 131, 146, and 171. Residues 167 to 198 are a coiled coil; that stretch reads VDAASLRRQIIKLNRRLQLLEEENKERAKREM. The helical; Anchor for type IV membrane protein transmembrane segment at 199–216 threads the bilayer; sequence VMYSITVAFWLLNSWLWF. Residues 217 to 218 lie on the Mitochondrial intermembrane side of the membrane; it reads RR.

Belongs to the Tango11 family. In terms of assembly, homodimer. Interacts with DNM1L. Interacts with C11orf65/MFI; the interaction inhibits MFF interaction with DNM1L.

It is found in the mitochondrion outer membrane. The protein localises to the peroxisome. The protein resides in the cytoplasmic vesicle. It localises to the secretory vesicle. Its subcellular location is the synaptic vesicle. Plays a role in mitochondrial and peroxisomal fission. Promotes the recruitment and association of the fission mediator dynamin-related protein 1 (DNM1L) to the mitochondrial surface. May be involved in regulation of synaptic vesicle membrane dynamics by recruitment of DNM1L to clathrin-containing vesicles. The protein is Mitochondrial fission factor (MFF) of Bos taurus (Bovine).